A 481-amino-acid chain; its full sequence is MIQVLLVTICLAVFPYQGSSIILESGNVDDYEVVYPRKVTALPKGAVQPKYEDAMQYEFKVNGEAVVLHLEKNKGLFSEDYSETHYSPDGREITTYPSVEDHCYYHGRIHNDADSTASISACDGLKGYFKLQGETYLIEPLELSDSEAHAVFKYENVEKEDEAPKMCGVTQNWESDESIKKASQLYLTPEQQRFPQRYIKLAIVVDHGMYTKYSSNFKKIRKRVHQMVSNINEMCRPLNIAITLALLDVWSEKDFITVQADAPTTAGLFGDWRERVLLKKKNHDHAQLLTDTNFARNTIGWAYLGRMCDEKYSVGVVQDHSSKVFMVAVTMTHELGHNLGMEHDDKDKCKCEACIMSAVISDKQSKLFSDCSKDYYQTFLTNDNPQCILNAPLRTDTVSTPVSGNEFLEAGEECDCGSPENPCCDAATCKLRPGAQCADGLCCDQCRFKKKRTICRRARGDNPDDRCTGQSADCPRNGLYS.

The first 20 residues, 1-20, serve as a signal peptide directing secretion; it reads MIQVLLVTICLAVFPYQGSS. A propeptide spanning residues 21 to 190 is cleaved from the precursor; the sequence is IILESGNVDD…KASQLYLTPE (170 aa). Positions 197-392 constitute a Peptidase M12B domain; sequence RYIKLAIVVD…DNPQCILNAP (196 aa). 3 disulfide bridges follow: C308–C387, C349–C371, and C351–C354. H333 lines the Zn(2+) pocket. The active site involves E334. Zn(2+) is bound by residues H337 and H343. The propeptide occupies 393–408; the sequence is LRTDTVSTPVSGNEFL. In terms of domain architecture, Disintegrin spans 400–481; that stretch reads TPVSGNEFLE…ADCPRNGLYS (82 aa). Disulfide bonds link C414–C429, C416–C424, C423–C446, C437–C443, C442–C467, and C455–C474. A Cell attachment site motif is present at residues 459 to 461; the sequence is RGD.

This sequence belongs to the venom metalloproteinase (M12B) family. P-II subfamily. P-IIa sub-subfamily. In terms of assembly, monomer. It depends on Zn(2+) as a cofactor. In terms of tissue distribution, expressed by the venom gland.

The protein resides in the secreted. Impairs hemostasis in the envenomed animal. Its function is as follows. Inhibits platelet aggregation induced by ADP, thrombin, platelet-activating factor and collagen. Acts by inhibiting fibrinogen interaction with platelet receptors GPIIb/GPIIIa (ITGA2B/ITGB3). This chain is Zinc metalloproteinase/disintegrin, found in Protobothrops elegans (Elegant pitviper).